Consider the following 396-residue polypeptide: Elongation factor Tu 1 (396 aa).

Residues 10–206 (KPHVNVGTIG…ALDTYIPTPK (197 aa)) enclose the tr-type G domain. The tract at residues 19-26 (GHVDHGKT) is G1. GTP is bound at residue 19 to 26 (GHVDHGKT). Threonine 26 lines the Mg(2+) pocket. The tract at residues 60-64 (GITIS) is G2. The G3 stretch occupies residues 81-84 (DCPG). GTP-binding positions include 81–85 (DCPGH) and 136–139 (NKAD). The segment at 136-139 (NKAD) is G4. The G5 stretch occupies residues 174–176 (SAL).

This sequence belongs to the TRAFAC class translation factor GTPase superfamily. Classic translation factor GTPase family. EF-Tu/EF-1A subfamily. Monomer.

The protein localises to the cytoplasm. The enzyme catalyses GTP + H2O = GDP + phosphate + H(+). In terms of biological role, GTP hydrolase that promotes the GTP-dependent binding of aminoacyl-tRNA to the A-site of ribosomes during protein biosynthesis. This Ruthia magnifica subsp. Calyptogena magnifica protein is Elongation factor Tu 1.